A 617-amino-acid chain; its full sequence is Syncytin-A (617 aa).

The signal sequence occupies residues 1–17 (MVRPWVFCLLLFPCSSA). The Extracellular segment spans residues 18-544 (YSDSWMPLVN…WIQWLGLGPW (527 aa)). Asparagine 27 is a glycosylation site (N-linked (GlcNAc...) asparagine). Residues 44-47 (CWVC) carry the CXXC motif. Cystine bridges form between cysteine 44/cysteine 47, cysteine 44/cysteine 505, and cysteine 497/cysteine 504. N-linked (GlcNAc...) asparagine glycosylation is found at asparagine 272 and asparagine 365. Residues 420–440 (LLPLLAGLGIASALGLGIAGI) form a fusion peptide region. A CX6CC motif is present at residues 497–505 (CLFLQEECC). The helical transmembrane segment at 545–565 (LPSWLTSLMAPILFILVLLVF) threads the bilayer. Residues 566 to 617 (RPCLLNCLTHSVSRRMSSFIHTTTEGHVDKILLLRESQYKRLPQEPPEEDAV) lie on the Cytoplasmic side of the membrane.

It belongs to the gamma type-C retroviral envelope protein family. In terms of assembly, the mature protein consists of a trimer of SU-TM heterodimers. The SU-TM heterodimers are attached by a labile interchain disulfide bond. Synthesized as an inactive precursor that is heavily N-glycosylated and processed likely by furin in the Golgi to yield the mature SU and TM proteins. The cleavage site between SU and TM requires the minimal sequence [KR]-X-[KR]-R. In terms of processing, the CXXC motif is highly conserved across a broad range of retroviral envelope proteins. It is thought to participate in the formation of a labile disulfide bond possibly with the CX6CC motif present in the transmembrane protein. Isomerization of the intersubunit disulfide bond to an SU intrachain disulfide bond is thought to occur upon receptor recognition in order to allow membrane fusion. In terms of tissue distribution, highly expressed in placenta where it localizes to syncytiotrophoblasts of the labyrinthine zona. Specifically localizes to syncytiotrophoblast layer I (SynT-I). Also detected at very low levels in hippocampus, brain, testis and ovary.

It is found in the cell membrane. In terms of biological role, this endogenous retroviral envelope protein has retained its original fusogenic properties. Together with Synb, participates in trophoblast fusion and the formation of a syncytium during placenta morphogenesis. Syna is essential for placental development and is specifically required for formation of syncytiotrophoblast layer I (SynT-I). Promotes muscle myoblast fusion. Does not have immunosuppressive activity. The polypeptide is Syncytin-A (Mus musculus (Mouse)).